The primary structure comprises 668 residues: Alpha-1,4-glucan:maltose-1-phosphate maltosyltransferase (668 aa).

The segment at 263–288 (RKGRNNSLTPAPDDPGSPYAIGSEEG) is disordered. Alpha-maltose 1-phosphate contacts are provided by Lys264, Gln324, and Asp359. Asp395 (nucleophile) is an active-site residue. Asn396 serves as a coordination point for alpha-maltose 1-phosphate. Glu424 functions as the Proton donor in the catalytic mechanism. 535 to 536 (KY) lines the alpha-maltose 1-phosphate pocket.

It belongs to the glycosyl hydrolase 13 family. GlgE subfamily. In terms of assembly, homodimer.

It carries out the reaction alpha-maltose 1-phosphate + [(1-&gt;4)-alpha-D-glucosyl](n) = [(1-&gt;4)-alpha-D-glucosyl](n+2) + phosphate. Functionally, maltosyltransferase that uses maltose 1-phosphate (M1P) as the sugar donor to elongate linear or branched alpha-(1-&gt;4)-glucans. Is involved in a branched alpha-glucan biosynthetic pathway from trehalose, together with TreS, Mak and GlgB. The sequence is that of Alpha-1,4-glucan:maltose-1-phosphate maltosyltransferase from Cereibacter sphaeroides (strain ATCC 17023 / DSM 158 / JCM 6121 / CCUG 31486 / LMG 2827 / NBRC 12203 / NCIMB 8253 / ATH 2.4.1.) (Rhodobacter sphaeroides).